The primary structure comprises 163 residues: Probable chemoreceptor glutamine deamidase CheD (163 aa).

This sequence belongs to the CheD family.

The enzyme catalyses L-glutaminyl-[protein] + H2O = L-glutamyl-[protein] + NH4(+). Functionally, probably deamidates glutamine residues to glutamate on methyl-accepting chemotaxis receptors (MCPs), playing an important role in chemotaxis. The sequence is that of Probable chemoreceptor glutamine deamidase CheD from Borrelia garinii subsp. bavariensis (strain ATCC BAA-2496 / DSM 23469 / PBi) (Borreliella bavariensis).